We begin with the raw amino-acid sequence, 562 residues long: NAD-dependent histone deacetylase SIR2 (562 aa).

The segment at 1 to 67 (MTIPHMKYAV…RETNTTDPLG (67 aa)) is disordered. The span at 11–25 (SKTSENKVSNTVSPT) shows a compositional bias: polar residues. Residues 26 to 36 (QDKDAIRKQPD) are compositionally biased toward basic and acidic residues. One can recognise a Deacetylase sirtuin-type domain in the interval 237-527 (RLSNFFTIDH…AMVAQKCGWT (291 aa)). NAD(+) is bound by residues 262-281 (GAGV…EGFY) and 344-347 (QNID). The active-site Proton acceptor is histidine 364. Zn(2+)-binding residues include cysteine 372, cysteine 375, cysteine 396, and cysteine 399. Residues 471-473 (GTS), 496-498 (NRD), and cysteine 513 each bind NAD(+).

The protein belongs to the sirtuin family. Class I subfamily. As to quaternary structure, homomultimer. Forms a complex with SIR3 and SIR4. Component of the RENT complex, at least composed of SIR2, CDC14 and NET1. The RENT complex interacts with FOB1. Interacts with ESC8. Interacts with and ZDS2. Interacts with MCM10. Interacts with SLX5. Interacts with NSI1. Zn(2+) serves as cofactor.

It localises to the nucleus. The protein resides in the nucleolus. It catalyses the reaction N(6)-acetyl-L-lysyl-[protein] + NAD(+) + H2O = 2''-O-acetyl-ADP-D-ribose + nicotinamide + L-lysyl-[protein]. With respect to regulation, its activity is increased by calorie restriction, which slows the pace of aging and increases maximum lifespan. Activated by resveratrol (3,5,4'-trihydroxy-trans-stilbene), which is found in red wine. Functionally, NAD-dependent deacetylase, which participates in a wide range of cellular events including chromosome silencing, chromosome segregation, DNA recombination and the determination of life span. Involved in transcriptional repression of the silent mating-type loci HML and HMR and telomeric silencing via its association with SIR3 and SIR4. Plays a central role in ribosomal DNA (rDNA) silencing via its association with the RENT complex, preventing hyperrecombination, and repressing transcription from foreign promoters, which contributes to extending life span. Probably represses transcription via the formation of heterochromatin structure, which involves the compaction of chromatin fiber into a more condensed form, although this complex in at least one case can still bind euchromatic levels of positive transcription regulators. Although it displays some NAD-dependent histone deacetylase activity on histone H3K9Ac and H3K14Ac and histone H4K16Ac in vitro, such activity is unclear in vivo and may not be essential. This chain is NAD-dependent histone deacetylase SIR2 (SIR2), found in Saccharomyces cerevisiae (strain ATCC 204508 / S288c) (Baker's yeast).